Reading from the N-terminus, the 70-residue chain is Large ribosomal subunit protein bL31 (70 aa).

C16, C18, C37, and C40 together coordinate Zn(2+).

It belongs to the bacterial ribosomal protein bL31 family. Type A subfamily. In terms of assembly, part of the 50S ribosomal subunit. It depends on Zn(2+) as a cofactor.

Binds the 23S rRNA. The polypeptide is Large ribosomal subunit protein bL31 (Colwellia psychrerythraea (strain 34H / ATCC BAA-681) (Vibrio psychroerythus)).